We begin with the raw amino-acid sequence, 592 residues long: MKFCSMNGPSESEVESLLMSPCWGPPQTSAQDQYLLDGHKLLLEHDLDSLPSDADQKNSLDVLDNLLLNGSSLNALSDLKPLPPFTGYTGHLSINGISGHHYHAIAQRLPDESNNNYMQSAYHPQNQSNPTSTTQSNGGSNSNSNNSNEHNIVSSSTCLPESVLSGSGGGGGGNDACLADVKLFADSQLDSKLYSVADSCVMNGSGSGSAANGNGSGPSIATLTPIDQVADSLHNSGVRIYKDLTEYVDMNSIDDIAAIIGSAIADTTVPNQLDKDDNNDTRDSWMDLDAWIDGNCIQQESAKVLVSQQDSLGDFILPHSPLPMHASSSTLQSLLSHGYMPLLQNRLQNGPPNGNSSGGGGGANQGAGIKGDPQAPTSTSYCNELAAATSSSCSPPGSVVSTTDNPNGLMINPRYLSNPTNNQATGNLHQQGGYSMQASGLSLKDNGLCSPDLLGNYPHTTTASTTGSEMRTGAPKAKRSRSQKKSNQQQQQQQQQQQQQGDGGGQPTTPQMSAISPSGFSASDLSGLLGKEKPVHRCSICNRGFLNKSNIKVHLRTHTGEKPFRCDVCAKAFRQKAHLLKHQQIHKRIGRD.

Positions 114–123 (NNNYMQSAYH) are enriched in polar residues. Disordered stretches follow at residues 114 to 156 (NNNY…VSSS), 343 to 377 (LQNRLQNGPPNGNSSGGGGGANQGAGIKGDPQAPT), 416 to 439 (LSNPTNNQATGNLHQQGGYSMQAS), and 459 to 527 (HTTT…DLSG). A compositionally biased stretch (low complexity) spans 124–148 (PQNQSNPTSTTQSNGGSNSNSNNSN). The span at 356 to 369 (SSGGGGGANQGAGI) shows a compositional bias: gly residues. The segment covering 459 to 469 (HTTTASTTGSE) has biased composition (polar residues). Residues 488-500 (QQQQQQQQQQQQQ) show a composition bias toward low complexity. The segment covering 507 to 524 (PTTPQMSAISPSGFSASD) has biased composition (polar residues). 2 consecutive C2H2-type zinc fingers follow at residues 536–558 (HRCSICNRGFLNKSNIKVHLRTH) and 564–586 (FRCDVCAKAFRQKAHLLKHQQIH).

The protein localises to the nucleus. Transcriptional activator. In tracheal terminal cells, regulates the transcription of factors involved in the formation of a mature apical extracellular matrix (aECM) which is essential for the integrity and shape of seamless tubes. This is Ichor from Drosophila melanogaster (Fruit fly).